The sequence spans 591 residues: Protein CBFA2T3 (591 aa).

The disordered stretch occupies residues 1–105; that stretch reads MPGGTPRLEG…SSSASLSTHQ (105 aa). The segment at 1-381 is mediates localization to the nucleus; sequence MPGGTPRLEG…ADREELNHWI (381 aa). Residues 41 to 52 are compositionally biased toward pro residues; the sequence is STPPNMPPPPPA. The segment covering 55 to 105 has biased composition (polar residues); it reads QGATRHPSFTPSTMMNGSSHSPTAINGAPSTPNGFSNGPATSSSASLSTHQ. One can recognise a TAFH domain in the interval 112-207; it reads ARQLSKLKRF…SPAQYLAQHE (96 aa). Disordered regions lie at residues 226–291 and 386–420; these read LEVS…PPQH and DAEDMKKGSPPSARPHNSSSSSEAPQLDVHRDFAP. The span at 230 to 256 shows a compositional bias: basic and acidic residues; it reads ESGKRRTPDRTKENGLDRDPLHPEHLS. Positions 263 to 274 are enriched in polar residues; that stretch reads SPAQRYSPSNGL. Pro residues predominate over residues 279-290; the sequence is NGLPHPPGPPPQ. Over residues 394 to 410 the composition is skewed to low complexity; the sequence is SPPSARPHNSSSSSEAP. Positions 433–488 form a coiled coil; that stretch reads RKAEEAVNEVKRQAMSELQKAVSDAERKAHELITTERAKMERALAEAKRQASEDAL. Residues cysteine 501, cysteine 504, cysteine 512, cysteine 515, cysteine 521, cysteine 525, histidine 533, and cysteine 537 each contribute to the Zn(2+) site. The MYND-type zinc-finger motif lies at 501-537; the sequence is CWNCGRKASETCSGCNTARYCGSFCQHKDWEKHHHVC. Residues 548–591 are disordered; the sequence is SVPTAVGQPEAVPPMASSPSDAGSAGASRAGTPGTPAPLESASR. Residues 560–585 are compositionally biased toward low complexity; sequence PPMASSPSDAGSAGASRAGTPGTPAP.

This sequence belongs to the CBFA2T family.

It localises to the nucleus. Its subcellular location is the nucleolus. The protein localises to the nucleoplasm. The protein resides in the golgi apparatus. Functionally, functions as a transcriptional repressor. Regulates the proliferation and the differentiation of erythroid progenitors. Plays a role in granulocyte differentiation. May also function as an A-kinase-anchoring protein. In Gallus gallus (Chicken), this protein is Protein CBFA2T3 (CBFA2T3).